The following is a 62-amino-acid chain: DNA-directed RNA polymerase subunit Rpo10 (62 aa).

The Zn(2+) site is built by C6, C9, C43, and C44.

This sequence belongs to the archaeal Rpo10/eukaryotic RPB10 RNA polymerase subunit family. Part of the RNA polymerase complex. Zn(2+) serves as cofactor.

It is found in the cytoplasm. The enzyme catalyses RNA(n) + a ribonucleoside 5'-triphosphate = RNA(n+1) + diphosphate. Its function is as follows. DNA-dependent RNA polymerase (RNAP) catalyzes the transcription of DNA into RNA using the four ribonucleoside triphosphates as substrates. The chain is DNA-directed RNA polymerase subunit Rpo10 from Methanoculleus marisnigri (strain ATCC 35101 / DSM 1498 / JR1).